A 323-amino-acid chain; its full sequence is Lipoyl synthase (323 aa).

Residues cysteine 53, cysteine 58, cysteine 64, cysteine 79, cysteine 83, cysteine 86, and serine 293 each contribute to the [4Fe-4S] cluster site. The Radical SAM core domain maps to 65-282; it reads WTKKQATVMI…AATARAKGFS (218 aa).

Belongs to the radical SAM superfamily. Lipoyl synthase family. The cofactor is [4Fe-4S] cluster.

The protein localises to the cytoplasm. The enzyme catalyses [[Fe-S] cluster scaffold protein carrying a second [4Fe-4S](2+) cluster] + N(6)-octanoyl-L-lysyl-[protein] + 2 oxidized [2Fe-2S]-[ferredoxin] + 2 S-adenosyl-L-methionine + 4 H(+) = [[Fe-S] cluster scaffold protein] + N(6)-[(R)-dihydrolipoyl]-L-lysyl-[protein] + 4 Fe(3+) + 2 hydrogen sulfide + 2 5'-deoxyadenosine + 2 L-methionine + 2 reduced [2Fe-2S]-[ferredoxin]. It functions in the pathway protein modification; protein lipoylation via endogenous pathway; protein N(6)-(lipoyl)lysine from octanoyl-[acyl-carrier-protein]: step 2/2. In terms of biological role, catalyzes the radical-mediated insertion of two sulfur atoms into the C-6 and C-8 positions of the octanoyl moiety bound to the lipoyl domains of lipoate-dependent enzymes, thereby converting the octanoylated domains into lipoylated derivatives. This chain is Lipoyl synthase, found in Zymomonas mobilis subsp. mobilis (strain ATCC 31821 / ZM4 / CP4).